The primary structure comprises 445 residues: CBL-interacting serine/threonine-protein kinase 8 (445 aa).

Residues 9 to 262 enclose the Protein kinase domain; it reads YELGRTIGEG…IAEIRKDEWF (254 aa). ATP is bound by residues 15–23 and Lys38; that span reads IGEGTFAKV. Asp132 functions as the Proton acceptor in the catalytic mechanism. The interval 150–177 is activation loop; the sequence is DFGLSALPEQGVTILKTTCGTPNYVAPE. Residue Ser154 is modified to Phosphoserine. Thr166 carries the phosphothreonine modification. The 25-residue stretch at 302–326 folds into the NAF domain; the sequence is TGPLTLNAFDLIILSQGLNLATLFD. A PPI region spans residues 333-362; it reads KHQTRFISHKPANVVLSSMEVVSQSMGFKT.

This sequence belongs to the protein kinase superfamily. CAMK Ser/Thr protein kinase family. SNF1 subfamily. Interacts with CBL1 and CBL9. The cofactor is Mn(2+). Mostly expressed in roots, and, to a lower extent, in leaves, stems, flowers, and siliques.

The catalysed reaction is L-seryl-[protein] + ATP = O-phospho-L-seryl-[protein] + ADP + H(+). It catalyses the reaction L-threonyl-[protein] + ATP = O-phospho-L-threonyl-[protein] + ADP + H(+). Its function is as follows. CIPK serine-threonine protein kinases interact with CBL proteins. Binding of a CBL protein to the regulatory NAF domain of CIPK protein lead to the activation of the kinase in a calcium-dependent manner. The sequence is that of CBL-interacting serine/threonine-protein kinase 8 (CIPK8) from Arabidopsis thaliana (Mouse-ear cress).